Reading from the N-terminus, the 111-residue chain is uncharacterized protein (111 aa).

Residues 60 to 80 form a helical membrane-spanning segment; the sequence is TFGRFLAHISCLICILSKRIF.

Its subcellular location is the mitochondrion membrane. This is an uncharacterized protein from Arabidopsis thaliana (Mouse-ear cress).